A 310-amino-acid polypeptide reads, in one-letter code: MSEMDAVNKIRELRDAFGSFMTGVTVVTTCKDDGTPLGFTANSFASVSLDPALLLVSIAKTSSNYHNFADASHFAINILAEEQKDVSNIFARPSDDRFAQLVWAKSEYQNPLIDGVSAWFDCTTYQVVDAGDHAILIGKVENFTSAGFAGLGYYRGAYFTPAKSSTDVISSMKVMMMALIGHENKILLEQTADHKWALPHLMVEKDGAEKALEKIFATYQPEASPSFIYSVYDDVTTQQQYIAFLCNTPVPTAHKGQFVDLNDLEKLTFTDSALQSMLMRYRKENYLKTYGVYYGNHTSGTVRQIVKEGV.

Residues 40–43 (TANS), 57–63 (SIAKTSS), 90–91 (FA), and arginine 97 contribute to the FMN site.

This sequence belongs to the non-flavoprotein flavin reductase family. In terms of assembly, homodimer. The trigonelline monooxygenase is composed of a reductase component TgnA and an oxygenase component TgnB.

It catalyses the reaction a reduced flavin + NAD(+) = an oxidized flavin + NADH + 2 H(+). The catalysed reaction is FADH2 + NAD(+) = FAD + NADH + 2 H(+). The enzyme catalyses FMNH2 + NAD(+) = FMN + NADH + 2 H(+). Maximal reductase activity is achieved only upon trigonelline (TG) binding to the reductase component before interaction with NADH. It seems that TgnA undergoes an allosteric transition upon trigonelline (TG) binding accounting for the positive cooperativity toward NADH oxidation. Involved in the degradation of the pyridine ring of trigonelline (TG; N-methylnicotinate) into succinate and methylamine as carbon and nitrogen sources, respectively. TgnA catalyzes the reduction of flavin (FMN or FAD) by NADH and supplies the reduced flavin to the oxygenase component TgnB. In Acinetobacter baylyi (strain ATCC 33305 / BD413 / ADP1), this protein is Flavin-dependent trigonelline monooxygenase, reductase component.